The primary structure comprises 353 residues: Protein-arginine kinase (353 aa).

The Phosphagen kinase C-terminal domain maps to 24-256 (IVLSSRIRLA…RTVIDTEEQA (233 aa)). ATP is bound by residues 27 to 31 (SSRIR), His93, Arg127, 178 to 182 (RASVM), and 209 to 214 (RGLYGE). Residues 339–344 (RDVRRA) carry the RDXXRA motif of the pArg binding pocket involved in allosteric regulation motif.

This sequence belongs to the ATP:guanido phosphotransferase family.

The catalysed reaction is L-arginyl-[protein] + ATP = N(omega)-phospho-L-arginyl-[protein] + ADP + H(+). With respect to regulation, appears to be allosterically activated by the binding of pArg-containing polypeptides to the pArg-binding pocket localized in the C-terminal domain of McsB. Its function is as follows. Catalyzes the specific phosphorylation of arginine residues in proteins. This Symbiobacterium thermophilum (strain DSM 24528 / JCM 14929 / IAM 14863 / T) protein is Protein-arginine kinase.